Consider the following 201-residue polypeptide: LexA repressor (201 aa).

The H-T-H motif DNA-binding region spans 27 to 47; that stretch reads RMEISSAFGFASPNAAEDHLK. Catalysis depends on for autocatalytic cleavage activity residues S116 and K153.

It belongs to the peptidase S24 family. Homodimer.

The catalysed reaction is Hydrolysis of Ala-|-Gly bond in repressor LexA.. Represses a number of genes involved in the response to DNA damage (SOS response), including recA and lexA. In the presence of single-stranded DNA, RecA interacts with LexA causing an autocatalytic cleavage which disrupts the DNA-binding part of LexA, leading to derepression of the SOS regulon and eventually DNA repair. This Dechloromonas aromatica (strain RCB) protein is LexA repressor.